Here is an 8799-residue protein sequence, read N- to C-terminus: Nesprin-1 (8799 aa).

The actin-binding stretch occupies residues methionine 1–glycine 289. The Cytoplasmic segment spans residues methionine 1 to arginine 8748. Calponin-homology (CH) domains lie at isoleucine 27–glutamine 134 and glycine 178–proline 283. 52 Spectrin repeats span residues arginine 314–phenylalanine 397, aspartate 398–lysine 502, methionine 503–glutamate 609, glutamate 610–alanine 703, aspartate 704–valine 815, proline 816–glutamate 923, alanine 924–isoleucine 1024, alanine 1025–aspartate 1122, proline 1123–glutamate 1246, glycine 1247–isoleucine 1333, glutamine 1334–valine 1442, lysine 1443–histidine 1548, leucine 1549–leucine 1651, leucine 1652–valine 1761, leucine 1762–cysteine 1877, methionine 1878–leucine 1974, valine 1975–cysteine 2079, cysteine 2080–serine 2193, leucine 2194–threonine 2301, alanine 2302–alanine 2399, arginine 2400–cysteine 2511, valine 2512–cysteine 2617, glutamine 2618–valine 2729, isoleucine 2730–leucine 2836, valine 2837–valine 2960, threonine 2961–glutamate 3060, glutamine 3061–leucine 3169, lysine 3170–leucine 3273, aspartate 3274–alanine 3385, leucine 3386–leucine 3488, valine 3489–leucine 3591, asparagine 3592–tryptophan 3718, tyrosine 3719–glycine 3812, leucine 3813–lysine 3918, valine 3919–tyrosine 4026, arginine 4027–lysine 4137, alanine 4138–aspartate 4233, leucine 4234–serine 4337, valine 4338–alanine 4449, leucine 4450–serine 4558, leucine 4559–alanine 4667, isoleucine 4668–threonine 4774, threonine 4775–arginine 4880, methionine 4881–isoleucine 4989, tyrosine 4990–cysteine 5097, methionine 5098–alanine 5207, valine 5208–valine 5316, lysine 5317–lysine 5422, alanine 5423–leucine 5520, asparagine 5521–alanine 5628, alanine 5629–alanine 5745, and valine 5746–histidine 5851. A coiled-coil region spans residues arginine 314–serine 8666. Lysine 377 bears the Phosphoserine mark. A Phosphoserine modification is found at serine 732. The tract at residues lysine 1288–glutamate 1310 is disordered. At threonine 2268 the chain carries Phosphothreonine. Serine 5655 bears the Phosphoserine mark. The interval proline 5868–valine 5894 is disordered. Spectrin repeat units lie at residues leucine 5971–lysine 6080, leucine 6081–glutamate 6187, arginine 6377–glutamine 6488, isoleucine 6489–leucine 6584, histidine 6585–tryptophan 6694, serine 6695–lysine 6798, histidine 6799–leucine 6905, histidine 6906–leucine 7023, leucine 7024–alanine 7131, leucine 7132–leucine 7240, leucine 7241–glycine 7353, valine 7354–phenylalanine 7457, leucine 7458–isoleucine 7561, aspartate 7562–leucine 7674, leucine 7675–alanine 7786, valine 7787–threonine 7886, leucine 7887–threonine 8000, tryptophan 8001–phenylalanine 8109, and isoleucine 8110–proline 8221. A phosphoserine mark is found at aspartate 8225 and serine 8227. The interval threonine 8237–leucine 8287 is disordered. The segment covering proline 8257–leucine 8269 has biased composition (low complexity). Threonine 8278 is modified (phosphothreonine). Phosphoserine is present on residues serine 8281, serine 8284, and serine 8308. Spectrin repeat units lie at residues serine 8332–asparagine 8440, leucine 8441–alanine 8550, and leucine 8551–glutamine 8668. Residue threonine 8363 is modified to Phosphothreonine. The tract at residues serine 8673–proline 8735 is disordered. Composition is skewed to polar residues over residues threonine 8682–glutamine 8698 and serine 8706–lysine 8718. Over residues serine 8721–proline 8735 the composition is skewed to basic and acidic residues. The 60-residue stretch at arginine 8740–leucine 8799 folds into the KASH domain. A helical; Anchor for type IV membrane protein transmembrane segment spans residues alanine 8749 to methionine 8769. At serine 8770–leucine 8799 the chain is on the perinuclear space side.

The protein belongs to the nesprin family. In terms of assembly, core component of LINC complexes which are composed of inner nuclear membrane SUN domain-containing proteins coupled to outer nuclear membrane KASH domain-containing nesprins. SUN and KASH domain-containing proteins seem to bind each other promiscuously; however, differentially expression of LINC complex constituents can give rise to specific assemblies. At least SUN1/2-containing core LINC complexes are proposed to be hexameric composed of three protomers of each KASH and SUN domain-containing protein. The SUN2:SYNE1/KASH1 LINC complex is a heterohexamer; the homotrimeric cloverleave-like conformation of the SUN domain is a prerequisite for LINC complex formation in which three separate SYNE1/KASH1 peptides bind at the interface of adjacent SUN domains. Self-associates. Interacts with SYNE3. Interacts with SUN3; proposed to form a spermatogenesis-specific LINC complex with SUN3 during sperm head formation. May interact with MUSK. Interacts with SPAG4/SUN4. Interacts with EMD and LMNA in vitro. Interacts with F-actin via its N-terminal domain. Interacts with DCTN1 and DYNC1I1/2; suggesting the association with the dynein-dynactin motor complex. Interacts (via KASH domain) with TMEM258. The disulfid bond with SUN1 or SUN2 is required for stability of the respective LINC complex under tensile forces. In terms of tissue distribution, expressed in C2F3 and CH310T1/2 cells, brain and skeletal muscle (at protein level).

The protein resides in the nucleus outer membrane. The protein localises to the nucleus. It is found in the nucleus envelope. It localises to the cytoplasm. Its subcellular location is the cytoskeleton. The protein resides in the myofibril. The protein localises to the sarcomere. Functionally, multi-isomeric modular protein which forms a linking network between organelles and the actin cytoskeleton to maintain the subcellular spatial organization. As a component of the LINC (LInker of Nucleoskeleton and Cytoskeleton) complex involved in the connection between the nuclear lamina and the cytoskeleton. The nucleocytoplasmic interactions established by the LINC complex play an important role in the transmission of mechanical forces across the nuclear envelope and in nuclear movement and positioning. May be involved in nucleus-centrosome attachment. During interkinetic nuclear migration (INM) at G2 phase and nuclear migration in neural progenitors its LINC complex association with SUN1/2 and probably association with cytoplasmic dynein-dynactin motor complexes functions to pull the nucleus toward the centrosome; SYNE1 and SYNE2 seem to act redundantly in cerebellum, midbrain, brain stem, and other brain regions except cerebral cortex and hippocampus. Required for centrosome migration to the apical cell surface during early ciliogenesis. May be involved in nuclear remodeling during sperm head formation in spermatogenesis; a probable SUN3:SYNE1/KASH1 LINC complex may tether spermatid nuclei to posterior cytoskeletal structures such as the manchette. In Mus musculus (Mouse), this protein is Nesprin-1.